The primary structure comprises 465 residues: Uronate isomerase (465 aa).

Belongs to the metallo-dependent hydrolases superfamily. Uronate isomerase family.

The catalysed reaction is D-glucuronate = D-fructuronate. It carries out the reaction aldehydo-D-galacturonate = keto-D-tagaturonate. It functions in the pathway carbohydrate metabolism; pentose and glucuronate interconversion. The chain is Uronate isomerase from Streptococcus equi subsp. zooepidemicus (strain H70).